Here is a 232-residue protein sequence, read N- to C-terminus: Ornithine carbamoyltransferase (232 aa).

Residues Q15, R39, and 66-69 each bind carbamoyl phosphate; that span reads HPTQ. L-ornithine-binding positions include N99, D163, and 167–168; that span reads SM. Carbamoyl phosphate contacts are provided by residues 204 to 207 and T232; that span reads HCLP.

The protein belongs to the aspartate/ornithine carbamoyltransferase superfamily. OTCase family.

The protein resides in the cytoplasm. It carries out the reaction carbamoyl phosphate + L-ornithine = L-citrulline + phosphate + H(+). The protein operates within amino-acid biosynthesis; L-arginine biosynthesis; L-arginine from L-ornithine and carbamoyl phosphate: step 1/3. Functionally, reversibly catalyzes the transfer of the carbamoyl group from carbamoyl phosphate (CP) to the N(epsilon) atom of ornithine (ORN) to produce L-citrulline. In Neisseria flava, this protein is Ornithine carbamoyltransferase (argF).